The sequence spans 313 residues: E3 ubiquitin-protein ligase RNF126 (313 aa).

The residue at position 2 (Ala2) is an N-acetylalanine. At Ser5 the chain carries Phosphoserine. The segment at Ser5–Ala101 is required for interaction with BAG6. Cys13, Cys16, Cys29, and Cys32 together coordinate Zn(2+). The segment at Cys13–Cys32 adopts a C4-type zinc-finger fold. Disordered stretches follow at residues Glu42–Gln64 and Thr96–Pro128. Residues Ala47 to Gln64 show a composition bias toward polar residues. Positions Asp104–Gln117 are enriched in basic and acidic residues. Residues His118–Pro128 show a composition bias toward basic residues. The interval Thr203–Asn306 is sufficient for interaction with AICDA. The RING-type zinc-finger motif lies at Cys232–Arg273. The tract at residues Asn280–Ser313 is disordered. Residues Ser292–Ser313 show a composition bias toward low complexity.

In terms of assembly, interacts with CCDC50, EGFR, FLT3 and SCAMP3. Interacts with BAG6 (via ubiquitin-like domain); required for BAG6-dependent ubiquitination of proteins mislocalized to the cytosol. Interacts with CDKN1A. Interacts with AICDA. Ubiquitinated. May undergo autoubiquitination.

The protein localises to the cytoplasm. Its subcellular location is the nucleus. It carries out the reaction S-ubiquitinyl-[E2 ubiquitin-conjugating enzyme]-L-cysteine + [acceptor protein]-L-lysine = [E2 ubiquitin-conjugating enzyme]-L-cysteine + N(6)-ubiquitinyl-[acceptor protein]-L-lysine.. It participates in protein modification; protein ubiquitination. Functionally, E3 ubiquitin-protein ligase that mediates ubiquitination oF target proteins. Depending on the associated E2 ligase, mediates 'Lys-27'-, 'Lys-29'-, 'Lys-48'- and/or 'Lys-63'-linked polyubiquitination of substrates. Part of a BAG6-dependent quality control process ensuring that proteins of the secretory pathway that are mislocalized to the cytosol are degraded by the proteasome. Probably acts by providing the ubiquitin ligase activity associated with the BAG6 complex and be responsible for ubiquitination of the hydrophobic mislocalized proteins and their targeting to the proteasome. May also play a role in the endosomal recycling of IGF2R, the cation-independent mannose-6-phosphate receptor. May play a role in the endosomal sorting and degradation of several membrane receptors including EGFR, FLT3, MET and CXCR4, by mediating their ubiquitination. By ubiquitinating CDKN1A/p21 and targeting it for degradation, may also promote cell proliferation. May monoubiquitinate AICDA. Acts as a regulator of DNA repair by mediating 'Lys-27'- and 'Lys-29'-linked polyubiquitination of MRE11, thereby promoting the exonuclease activity of MRE11. The protein is E3 ubiquitin-protein ligase RNF126 of Bos taurus (Bovine).